A 643-amino-acid polypeptide reads, in one-letter code: Thioredoxin reductase 3 (643 aa).

Residues M1 to E53 form a disordered region. Position 26 is an asymmetric dimethylarginine; alternate (R26). Omega-N-methylarginine; alternate is present on R26. Residues S41 and S42 each carry the phosphoserine modification. The Glutaredoxin domain maps to R56–D156. Position 158 to 187 (D158 to F187) interacts with FAD. The cysteines at positions 203 and 208 are disulfide-linked. Position 379 is an N6-succinyllysine (K379). The active-site Proton acceptor is the H616. A cross-link (cysteinyl-selenocysteine (Cys-Sec)) is located at residues C641–U642. Position 642 (U642) is a non-standard amino acid, selenocysteine.

Belongs to the class-I pyridine nucleotide-disulfide oxidoreductase family. In terms of assembly, homodimer. It depends on FAD as a cofactor.

It is found in the cytoplasm. Its subcellular location is the nucleus. The protein resides in the microsome. It localises to the endoplasmic reticulum. It catalyses the reaction [thioredoxin]-dithiol + NADP(+) = [thioredoxin]-disulfide + NADPH + H(+). Displays thioredoxin reductase, glutaredoxin and glutathione reductase activities. Catalyzes disulfide bond isomerization. Promotes disulfide bond formation between GPX4 and various sperm proteins and may play a role in sperm maturation by promoting formation of sperm structural components. The chain is Thioredoxin reductase 3 from Homo sapiens (Human).